We begin with the raw amino-acid sequence, 698 residues long: FHF complex subunit HOOK-interacting protein 2B (698 aa).

It belongs to the FHIP family.

The protein is FHF complex subunit HOOK-interacting protein 2B (fhip2b) of Xenopus tropicalis (Western clawed frog).